A 175-amino-acid chain; its full sequence is uncharacterized protein (175 aa).

The segment at 71–166 (QPKPTYNVSF…KPPQFKIRPA (96 aa)) adopts a DNL-type zinc-finger fold. Cys82, Cys85, Cys107, and Cys110 together coordinate Zn(2+).

This is an uncharacterized protein from Schizosaccharomyces pombe (strain 972 / ATCC 24843) (Fission yeast).